Here is a 446-residue protein sequence, read N- to C-terminus: Phosphoglucosamine mutase (446 aa).

Residue S100 is the Phosphoserine intermediate of the active site. Residues S100, D241, D243, and D245 each contribute to the Mg(2+) site. S100 is modified (phosphoserine).

Belongs to the phosphohexose mutase family. Mg(2+) is required as a cofactor. In terms of processing, activated by phosphorylation.

It catalyses the reaction alpha-D-glucosamine 1-phosphate = D-glucosamine 6-phosphate. In terms of biological role, catalyzes the conversion of glucosamine-6-phosphate to glucosamine-1-phosphate. This chain is Phosphoglucosamine mutase, found in Methylobacterium sp. (strain 4-46).